Consider the following 240-residue polypeptide: Caffeoyl-CoA O-methyltransferase 5 (240 aa).

Substrate is bound at residue K14. S-adenosyl-L-methionine is bound by residues T56, E78, 80 to 81, S86, D104, and A133; that span reads GV. D156 is a substrate binding site. Residue D156 participates in a divalent metal cation binding. D158 provides a ligand contact to S-adenosyl-L-methionine. 2 residues coordinate a divalent metal cation: D182 and N183. A substrate-binding site is contributed by N187.

It belongs to the class I-like SAM-binding methyltransferase superfamily. Cation-dependent O-methyltransferase family. CCoAMT subfamily. The cofactor is Mg(2+). In terms of tissue distribution, expression steadily increases from the bottom to the top of the plant.

It catalyses the reaction (E)-caffeoyl-CoA + S-adenosyl-L-methionine = (E)-feruloyl-CoA + S-adenosyl-L-homocysteine + H(+). The protein operates within aromatic compound metabolism; phenylpropanoid biosynthesis. Methylates caffeoyl-CoA to feruloyl-CoA and 5-hydroxyferuloyl-CoA to sinapoyl-CoA. Plays a role in the synthesis of feruloylated polysaccharides. Involved in the reinforcement of the plant cell wall. Also involved in the responding to wounding or pathogen challenge by the increased formation of cell wall-bound ferulic acid polymers. Methylates 5-hydroxyferulolyl-CoA more efficiently than caffeoyl-CoA. The polypeptide is Caffeoyl-CoA O-methyltransferase 5 (CCOAOMT5) (Nicotiana tabacum (Common tobacco)).